The sequence spans 887 residues: Probable alpha/beta-glucosidase agdC (887 aa).

Positions 1–17 (MLRSLLLLAPMVGAAVA) are cleaved as a signal peptide. 3 N-linked (GlcNAc...) asparagine glycosylation sites follow: N171, N293, and N373. D422 serves as the catalytic Nucleophile. The active site involves E425. The disordered stretch occupies residues 457-483 (PRPLPGFPDDFQPPAASKRSVAKGSKV). D571 acts as the Proton donor in catalysis. N747 and N879 each carry an N-linked (GlcNAc...) asparagine glycan.

It belongs to the glycosyl hydrolase 31 family.

It localises to the secreted. It catalyses the reaction Hydrolysis of terminal, non-reducing (1-&gt;4)-linked alpha-D-glucose residues with release of alpha-D-glucose.. It carries out the reaction Hydrolysis of terminal, non-reducing beta-D-glucosyl residues with release of beta-D-glucose.. In terms of biological role, glucosidase involved in the degradation of cellulosic biomass. Has both alpha- and beta-glucosidase activity. The polypeptide is Probable alpha/beta-glucosidase agdC (agdC) (Aspergillus clavatus (strain ATCC 1007 / CBS 513.65 / DSM 816 / NCTC 3887 / NRRL 1 / QM 1276 / 107)).